The primary structure comprises 411 residues: Arginine deiminase 1 (411 aa).

Catalysis depends on cysteine 401, which acts as the Amidino-cysteine intermediate.

The protein belongs to the arginine deiminase family.

It localises to the cytoplasm. The catalysed reaction is L-arginine + H2O = L-citrulline + NH4(+). The protein operates within amino-acid degradation; L-arginine degradation via ADI pathway; carbamoyl phosphate from L-arginine: step 1/2. In Staphylococcus epidermidis (strain ATCC 12228 / FDA PCI 1200), this protein is Arginine deiminase 1 (arcA1).